Reading from the N-terminus, the 408-residue chain is Imidazolonepropionase (408 aa).

Residues His-73 and His-75 each contribute to the Fe(3+) site. Positions 73 and 75 each coordinate Zn(2+). Residues Arg-82, Tyr-145, and His-178 each coordinate 4-imidazolone-5-propanoate. An N-formimidoyl-L-glutamate-binding site is contributed by Tyr-145. His-243 provides a ligand contact to Fe(3+). Residue His-243 coordinates Zn(2+). Residue Gln-246 coordinates 4-imidazolone-5-propanoate. Asp-318 serves as a coordination point for Fe(3+). Asp-318 provides a ligand contact to Zn(2+). N-formimidoyl-L-glutamate contacts are provided by Asn-320 and Gly-322. 4-imidazolone-5-propanoate is bound at residue Ser-323.

It belongs to the metallo-dependent hydrolases superfamily. HutI family. It depends on Zn(2+) as a cofactor. Fe(3+) is required as a cofactor.

It is found in the cytoplasm. It carries out the reaction 4-imidazolone-5-propanoate + H2O = N-formimidoyl-L-glutamate. Its pathway is amino-acid degradation; L-histidine degradation into L-glutamate; N-formimidoyl-L-glutamate from L-histidine: step 3/3. Functionally, catalyzes the hydrolytic cleavage of the carbon-nitrogen bond in imidazolone-5-propanoate to yield N-formimidoyl-L-glutamate. It is the third step in the universal histidine degradation pathway. In Shewanella sediminis (strain HAW-EB3), this protein is Imidazolonepropionase.